The chain runs to 34 residues: DDIT3 upstream open reading frame protein (34 aa).

In terms of assembly, interacts with DDIT3 (isoform 1).

It is found in the nucleus. Its subcellular location is the cytoplasm. Product of the upstream open reading frame (uORF) of DDIT3/CHOP that is specifically produced in absence of stress, thereby preventing translation of downstream stress effector DDIT3/CHOP. The chain is DDIT3 upstream open reading frame protein from Mus musculus (Mouse).